Consider the following 1068-residue polypeptide: Focal adhesion kinase 1 (1068 aa).

A disordered region spans residues 1-26; the sequence is MAAAYLDPNLNHNPSTNAKSRLSTGM. The segment covering 10–23 has biased composition (polar residues); it reads LNHNPSTNAKSRLS. The region spanning 35–355 is the FERM domain; sequence RVLRVFHYFE…GYCRLVSGAS (321 aa). Phosphotyrosine is present on residues Tyr-403 and Tyr-413. The Protein kinase domain occupies 435 to 693; it reads IELGRCIGEG…ELKAQLSTIL (259 aa). ATP contacts are provided by residues 441-447, Lys-467, and 513-515; these read IGEGQFG and ELC. The active-site Proton acceptor is the Asp-559. 2 positions are modified to phosphotyrosine; by autocatalysis: Tyr-589 and Tyr-590. Basic and acidic residues predominate over residues 699–710; sequence QQEERMRMESRR. Disordered stretches follow at residues 699 to 750 and 869 to 912; these read QQEE…QHMM and GNQH…DGYN. 2 positions are modified to phosphotyrosine: Tyr-874 and Tyr-941.

This sequence belongs to the protein kinase superfamily. Tyr protein kinase family. FAK subfamily. Post-translationally, phosphorylated on tyrosine residues; phosphorylated kinase is first detected during gastrulation, suggesting that tyrosine phosphorylation is developmentally regulated.

It is found in the cell junction. Its subcellular location is the focal adhesion. The protein localises to the cell membrane. The protein resides in the cytoplasm. It localises to the cytoskeleton. It is found in the cilium basal body. The enzyme catalyses L-tyrosyl-[protein] + ATP = O-phospho-L-tyrosyl-[protein] + ADP + H(+). Its function is as follows. Non-receptor protein-tyrosine kinase implicated in signaling pathways involved in cell motility, proliferation and apoptosis. Activated by tyrosine-phosphorylation in response to either integrin clustering induced by cell adhesion or antibody cross-linking, or via G-protein coupled receptor (GPCR) occupancy by ligands such as bombesin or lysophosphatidic acid, or via LDL receptor occupancy. Microtubule-induced dephosphorylation at Tyr-397 is crucial for the induction of focal adhesion disassembly. The polypeptide is Focal adhesion kinase 1 (ptk2) (Xenopus laevis (African clawed frog)).